Consider the following 407-residue polypeptide: Na(+)-translocating NADH-quinone reductase subunit F (407 aa).

A helical transmembrane segment spans residues 3–23 (IILGVVMFTLIVLALTVMILF). The 2Fe-2S ferredoxin-type domain maps to 32–126 (GDITVEINED…NLKIELPEEI (95 aa)). The [2Fe-2S] cluster site is built by Cys-69, Cys-75, Cys-78, and Cys-110. Residues 129–269 (VKKWTCEVIS…SGPFGEFFAK (141 aa)) form the FAD-binding FR-type domain.

Belongs to the NqrF family. Composed of six subunits; NqrA, NqrB, NqrC, NqrD, NqrE and NqrF. It depends on [2Fe-2S] cluster as a cofactor. FAD serves as cofactor.

It localises to the cell inner membrane. The enzyme catalyses a ubiquinone + n Na(+)(in) + NADH + H(+) = a ubiquinol + n Na(+)(out) + NAD(+). NQR complex catalyzes the reduction of ubiquinone-1 to ubiquinol by two successive reactions, coupled with the transport of Na(+) ions from the cytoplasm to the periplasm. The first step is catalyzed by NqrF, which accepts electrons from NADH and reduces ubiquinone-1 to ubisemiquinone by a one-electron transfer pathway. The sequence is that of Na(+)-translocating NADH-quinone reductase subunit F from Yersinia pseudotuberculosis serotype O:1b (strain IP 31758).